The following is a 501-amino-acid chain: Xylulose kinase (501 aa).

Residue 81-82 coordinates substrate; it reads MH. Catalysis depends on D239, which acts as the Proton acceptor.

This sequence belongs to the FGGY kinase family.

It catalyses the reaction D-xylulose + ATP = D-xylulose 5-phosphate + ADP + H(+). Its function is as follows. Catalyzes the phosphorylation of D-xylulose to D-xylulose 5-phosphate. This chain is Xylulose kinase, found in Lactococcus lactis subsp. lactis (strain IL1403) (Streptococcus lactis).